Reading from the N-terminus, the 244-residue chain is 1-(5-phosphoribosyl)-5-[(5-phosphoribosylamino)methylideneamino] imidazole-4-carboxamide isomerase (244 aa).

The active-site Proton acceptor is the aspartate 8. Catalysis depends on aspartate 129, which acts as the Proton donor.

It belongs to the HisA/HisF family.

The protein localises to the cytoplasm. It carries out the reaction 1-(5-phospho-beta-D-ribosyl)-5-[(5-phospho-beta-D-ribosylamino)methylideneamino]imidazole-4-carboxamide = 5-[(5-phospho-1-deoxy-D-ribulos-1-ylimino)methylamino]-1-(5-phospho-beta-D-ribosyl)imidazole-4-carboxamide. Its pathway is amino-acid biosynthesis; L-histidine biosynthesis; L-histidine from 5-phospho-alpha-D-ribose 1-diphosphate: step 4/9. The chain is 1-(5-phosphoribosyl)-5-[(5-phosphoribosylamino)methylideneamino] imidazole-4-carboxamide isomerase from Geobacter sulfurreducens (strain ATCC 51573 / DSM 12127 / PCA).